A 312-amino-acid polypeptide reads, in one-letter code: Pantothenate kinase (312 aa).

Position 97 to 104 (97 to 104 (GSVAVGKS)) interacts with ATP.

It belongs to the prokaryotic pantothenate kinase family.

It localises to the cytoplasm. It catalyses the reaction (R)-pantothenate + ATP = (R)-4'-phosphopantothenate + ADP + H(+). It participates in cofactor biosynthesis; coenzyme A biosynthesis; CoA from (R)-pantothenate: step 1/5. The chain is Pantothenate kinase from Mycolicibacterium paratuberculosis (strain ATCC BAA-968 / K-10) (Mycobacterium paratuberculosis).